Here is a 334-residue protein sequence, read N- to C-terminus: GTPase Obg (334 aa).

Positions Met-1–Leu-159 constitute an Obg domain. The OBG-type G domain maps to Ala-160–Gln-331. Residues Gly-166–Ser-173, Phe-191–Tyr-195, Asp-212–Gly-215, Asn-282–Asp-285, and Ser-312–Ala-314 contribute to the GTP site. Mg(2+) contacts are provided by Ser-173 and Thr-193.

The protein belongs to the TRAFAC class OBG-HflX-like GTPase superfamily. OBG GTPase family. As to quaternary structure, monomer. The cofactor is Mg(2+).

The protein localises to the cytoplasm. Functionally, an essential GTPase which binds GTP, GDP and possibly (p)ppGpp with moderate affinity, with high nucleotide exchange rates and a fairly low GTP hydrolysis rate. Plays a role in control of the cell cycle, stress response, ribosome biogenesis and in those bacteria that undergo differentiation, in morphogenesis control. This Francisella tularensis subsp. tularensis (strain FSC 198) protein is GTPase Obg.